The following is a 218-amino-acid chain: Large ribosomal subunit protein uL4 (218 aa).

The disordered stretch occupies residues 46 to 102; the sequence is ARQGTHSTKTRGEVRGGGRKPFRQKGTGRARQGSIRAPHFTGGGISHGPKPRDYSQR. The segment covering 62-73 has biased composition (basic residues); it reads GGRKPFRQKGTG.

Belongs to the universal ribosomal protein uL4 family. As to quaternary structure, part of the 50S ribosomal subunit.

One of the primary rRNA binding proteins, this protein initially binds near the 5'-end of the 23S rRNA. It is important during the early stages of 50S assembly. It makes multiple contacts with different domains of the 23S rRNA in the assembled 50S subunit and ribosome. Its function is as follows. Forms part of the polypeptide exit tunnel. This chain is Large ribosomal subunit protein uL4, found in Corynebacterium glutamicum (strain R).